The primary structure comprises 357 residues: Protein pelota homolog (357 aa).

Belongs to the eukaryotic release factor 1 family. Pelota subfamily. In terms of assembly, monomer. A divalent metal cation is required as a cofactor.

The protein resides in the cytoplasm. Its function is as follows. May function in recognizing stalled ribosomes, interact with stem-loop structures in stalled mRNA molecules, and effect endonucleolytic cleavage of the mRNA. May play a role in the release non-functional ribosomes and degradation of damaged mRNAs. Has endoribonuclease activity. In Halobacterium salinarum (strain ATCC 29341 / DSM 671 / R1), this protein is Protein pelota homolog.